A 435-amino-acid chain; its full sequence is Trigger factor (435 aa).

The PPIase FKBP-type domain maps to 183–263; the sequence is GDFINVDVTI…VKTIWQGNMP (81 aa).

It belongs to the FKBP-type PPIase family. Tig subfamily.

The protein resides in the cytoplasm. The catalysed reaction is [protein]-peptidylproline (omega=180) = [protein]-peptidylproline (omega=0). In terms of biological role, involved in protein export. Acts as a chaperone by maintaining the newly synthesized protein in an open conformation. Functions as a peptidyl-prolyl cis-trans isomerase. The sequence is that of Trigger factor from Protochlamydia amoebophila (strain UWE25).